The chain runs to 235 residues: Ribonuclease 3 (235 aa).

The region spanning 11 to 137 is the RNase III domain; that stretch reads RAWCAEALGY…VVGALYLDGG (127 aa). E51 is a binding site for Mg(2+). The active site involves D55. D123 and E126 together coordinate Mg(2+). The active site involves E126. Residues 164–233 enclose the DRBM domain; that stretch reads DYKTQLQEQL…ARQALMPEHH (70 aa).

It belongs to the ribonuclease III family. As to quaternary structure, homodimer. It depends on Mg(2+) as a cofactor.

It localises to the cytoplasm. It carries out the reaction Endonucleolytic cleavage to 5'-phosphomonoester.. Its function is as follows. Digests double-stranded RNA. Involved in the processing of primary rRNA transcript to yield the immediate precursors to the large and small rRNAs (23S and 16S). Processes some mRNAs, and tRNAs when they are encoded in the rRNA operon. Processes pre-crRNA and tracrRNA of type II CRISPR loci if present in the organism. This chain is Ribonuclease 3, found in Symbiobacterium thermophilum (strain DSM 24528 / JCM 14929 / IAM 14863 / T).